The following is an 85-amino-acid chain: Small ribosomal subunit protein uS17 (85 aa).

It belongs to the universal ribosomal protein uS17 family. As to quaternary structure, part of the 30S ribosomal subunit.

One of the primary rRNA binding proteins, it binds specifically to the 5'-end of 16S ribosomal RNA. This Mycoplasma genitalium (strain ATCC 33530 / DSM 19775 / NCTC 10195 / G37) (Mycoplasmoides genitalium) protein is Small ribosomal subunit protein uS17.